A 299-amino-acid chain; its full sequence is Ribosomal protein L11 methyltransferase (299 aa).

The S-adenosyl-L-methionine site is built by Thr139, Gly166, Asp188, and Asn231.

It belongs to the methyltransferase superfamily. PrmA family.

It is found in the cytoplasm. It catalyses the reaction L-lysyl-[protein] + 3 S-adenosyl-L-methionine = N(6),N(6),N(6)-trimethyl-L-lysyl-[protein] + 3 S-adenosyl-L-homocysteine + 3 H(+). Functionally, methylates ribosomal protein L11. This chain is Ribosomal protein L11 methyltransferase, found in Thermosynechococcus vestitus (strain NIES-2133 / IAM M-273 / BP-1).